The sequence spans 513 residues: MAKKRPLALLILDGWGYSEDTQDNAVFHANTPVLDKLNAQYPHSLISGSGIDVGLPDGQMGNSEVGHINIGSGRIVYQELTRISKAIADHEFEQNAALCDAVDKAIAANGAVHIMGLLSAGGVHSHEEHIEAMCRMAVERGATKVYLHAFLDGRDTPPRSAKNSLVHFDELFASLGHGRTASIIGRYFAMDRDNRWDRVSQAYELITEAKGKFTYASAPEALEAAYARDENDEFVAASAIVDAQGEAAVLSDNDSLIFMNFRADRARQITRTFVNPDFDGFKRNKTPKINFVMLTDYAADINAPVAYPSSDLVNTLGETLQNLDKTQLRISETEKYAHVTFFFNGGKEEPFEGEDRILIQSPKVATYDLQPEMSSTELTDKLVAAIESTKYDVIICNYPNGDMVGHSGNFDAAVKACEAVDACIGRVVEALAKVDGECLITADHGNAEKMKDPSNGQAFTAHTSNLVPFVYVGRDAVIKDGGRLSDIAPTMLTLMGQSIPKEMSGRCIIDLKE.

Mn(2+) is bound by residues Asp-13 and Ser-63. Ser-63 acts as the Phosphoserine intermediate in catalysis. Substrate-binding positions include His-124, 154 to 155 (RD), Arg-186, Arg-192, 262 to 265 (RADR), and Lys-335. Positions 402, 406, 443, 444, and 462 each coordinate Mn(2+).

Belongs to the BPG-independent phosphoglycerate mutase family. In terms of assembly, monomer. Mn(2+) serves as cofactor.

It carries out the reaction (2R)-2-phosphoglycerate = (2R)-3-phosphoglycerate. The protein operates within carbohydrate degradation; glycolysis; pyruvate from D-glyceraldehyde 3-phosphate: step 3/5. In terms of biological role, catalyzes the interconversion of 2-phosphoglycerate and 3-phosphoglycerate. In Shewanella frigidimarina (strain NCIMB 400), this protein is 2,3-bisphosphoglycerate-independent phosphoglycerate mutase.